Consider the following 551-residue polypeptide: MEEAELVKGRLQAITDKRKIQEEISQKRLKIEEEKLKHQHLKKKALREKWLLDGIGSGKEHDEMKKQNQQDQHQTQVLEQSILRLEKEIQDLEKAELQISANEEVILKKLKSIERTTEDIIRSVKVEKEEIPEESIEDIYANIPDLPSSYIPSRLRKERNEESDDEQNRKALYAMEIKVEKDLKTGESVVLSSIPLPSDDFKSTGIKVYEDRQKSVYAVSSNQNTAYNGTDGLAPVEVEDLLRQASERNSKSPTEYHEPVYANPFCRPMTPQRERVISPGPNSQERMVMMKANGLDHHESESVHGMTDGLSERRSNGLAHTSPTRPTPQPRSKVQQVEEMVHTQQKRMPSPWEESSIRQNEYEVSPRTELSPSRASPGKSGPQCSSPICQEEADVRYNIVHSLPPDVDDTEPVTMIFMGYQQADENEEEKKLLTGYDGVIHAELVVIDDEAEDDEGQAEKPSYHPVAPCSQVYQPAKPTPLPRKRSEVSPHENTNHKSPHKNSISLKEQEERLGSPARHSPLGVPGAGDGTEDPSLTALRIRMAKLGKKVI.

N-acetylmethionine is present on methionine 1. Residues 12–106 (QAITDKRKIQ…LQISANEEVI (95 aa)) adopt a coiled-coil conformation. Lysine 125 is covalently cross-linked (Glycyl lysine isopeptide (Lys-Gly) (interchain with G-Cter in SUMO2)). Phosphoserine is present on residues serine 135 and serine 163. A Glycyl lysine isopeptide (Lys-Gly) (interchain with G-Cter in SUMO1); alternate cross-link involves residue lysine 178. Residue lysine 178 forms a Glycyl lysine isopeptide (Lys-Gly) (interchain with G-Cter in SUMO2); alternate linkage. Residues 247-258 (ERNSKSPTEYHE) show a composition bias toward basic and acidic residues. Residues 247–267 (ERNSKSPTEYHEPVYANPFCR) form a disordered region. A Phosphothreonine modification is found at threonine 270. 2 disordered regions span residues 298–387 (HESE…CSSP) and 452–536 (EDDE…DPSL). A phosphoserine mark is found at serine 322, serine 350, serine 371, serine 376, serine 385, and serine 386. The segment covering 484-495 (KRSEVSPHENTN) has biased composition (basic and acidic residues). Phosphoserine is present on residues serine 498, serine 515, and serine 520.

It belongs to the paralemmin family. As to quaternary structure, interacts with GLUL. Phosphorylated. As to expression, expressed in the brain and the spinal cord. Expressed in the anterior olfactory nucleus, the olfactory tubercle, the nucleus supraopticus, the nucleus of the lateral olfactory tract, the piriform cortex, the cortico-amygdaloid transition zone, the septofimbrial nucleus and the indusium griseum (at protein level).

The protein resides in the cytoplasm. The protein localises to the cell projection. It localises to the dendrite. It is found in the dendritic spine. In Rattus norvegicus (Rat), this protein is Palmdelphin (Palmd).